The primary structure comprises 127 residues: Large ribosomal subunit protein bL19 (127 aa).

Belongs to the bacterial ribosomal protein bL19 family.

This protein is located at the 30S-50S ribosomal subunit interface and may play a role in the structure and function of the aminoacyl-tRNA binding site. In Acidovorax ebreus (strain TPSY) (Diaphorobacter sp. (strain TPSY)), this protein is Large ribosomal subunit protein bL19.